A 35-amino-acid polypeptide reads, in one-letter code: uncharacterized protein (35 aa).

This is an uncharacterized protein from Escherichia coli (Bacteriophage T3).